The sequence spans 474 residues: Hydrogenobyrinate a,c-diamide synthase (474 aa).

The region spanning 269-459 is the GATase cobBQ-type domain; the sequence is VVAVAGGQAF…LHTHWAGCPQ (191 aa). Residue Cys352 is the Nucleophile of the active site.

This sequence belongs to the CobB/CbiA family. The cofactor is Mg(2+).

It carries out the reaction hydrogenobyrinate + 2 L-glutamine + 2 ATP + 2 H2O = hydrogenobyrinate a,c-diamide + 2 L-glutamate + 2 ADP + 2 phosphate + 2 H(+). The protein operates within cofactor biosynthesis; adenosylcobalamin biosynthesis; cob(II)yrinate a,c-diamide from precorrin-2 (aerobic route): step 9/10. Its function is as follows. Catalyzes the ATP-dependent amidation of the two carboxylate groups at positions a and c of hydrogenobyrinate, using either L-glutamine or ammonia as the nitrogen source. The sequence is that of Hydrogenobyrinate a,c-diamide synthase from Thermobifida fusca (strain YX).